A 127-amino-acid chain; its full sequence is Protein translocase subunit SecE (127 aa).

Residues 1 to 19 are Cytoplasmic-facing; sequence MSANTEAQGSGRGLEAMKW. The chain crosses the membrane as a helical span at residues 20 to 32; it reads VVVVALLLVAIVG. The Periplasmic portion of the chain corresponds to 33–48; it reads NYLYRDIMLPLRALAV. Residues 49–60 form a helical membrane-spanning segment; the sequence is VILIAAAGGVAL. The Cytoplasmic portion of the chain corresponds to 61-97; it reads LTTKGKATVAFAREARTEVRKVIWPTRQETLHTTLIV. Residues 98-115 form a helical membrane-spanning segment; the sequence is AAVTAVMSLILWGLDGIL. The Periplasmic portion of the chain corresponds to 116-127; the sequence is VRLVSFITGLRF.

Belongs to the SecE/SEC61-gamma family. Component of the Sec protein translocase complex. Heterotrimer consisting of SecY, SecE and SecG subunits. The heterotrimers can form oligomers, although 1 heterotrimer is thought to be able to translocate proteins. Interacts with the ribosome. Interacts with SecDF, and other proteins may be involved. Interacts with SecA.

Its subcellular location is the cell inner membrane. In terms of biological role, essential subunit of the Sec protein translocation channel SecYEG. Clamps together the 2 halves of SecY. May contact the channel plug during translocation. In Escherichia coli O157:H7, this protein is Protein translocase subunit SecE.